The chain runs to 265 residues: Gap junction beta-4 protein (265 aa).

An intramembrane segment occupies 2–13 (NWGFLQGILSGV). At 14-20 (NKYSTAL) the chain is on the cytoplasmic side. Residues 21 to 40 (GRIWLSVVFIFRVLVYVVAA) traverse the membrane as a helical segment. The Extracellular segment spans residues 41 to 73 (EEVWDDEQKDFICNTKQPGCPNVCYDEFFPVSH). 3 disulfides stabilise this stretch: Cys-53–Cys-175, Cys-60–Cys-169, and Cys-64–Cys-164. Residues 74 to 94 (VRLWALQLILVTCPSLLVVMH) traverse the membrane as a helical segment. Over 95 to 130 (VAYREERERKHRLKHGPDAPALYSNLSKKRGGLWWT) the chain is Cytoplasmic. Residues 131–151 (YLLSLIFKAAVDSGFLYIFHC) traverse the membrane as a helical segment. The Extracellular segment spans residues 152–184 (IYKDYDMPRVVACSVQPCPHTVDCYISRPTEKK). Residues 185-205 (VFTYFMVVTAAICILLNLSEV) form a helical membrane-spanning segment. Topologically, residues 206–265 (AYLVGKRCMEVFRPRRQKTSRRHQLPDTCPPYVISKGHPQDESTVLTKAGMATVDAGVYP) are cytoplasmic.

This sequence belongs to the connexin family. Beta-type (group I) subfamily. As to quaternary structure, a hemichannel or connexon is composed of a hexamer of connexins. A functional gap junction is formed by the apposition of two hemichannels. Forms heteromeric channels with GJB2. In terms of tissue distribution, detected in adult heart, kidney, skin and cochlea, where it is detected in spiral ganglion, stria vascularis, spiral limbus and spiral ligament (at protein level).

It localises to the cell membrane. The protein resides in the cell junction. It is found in the gap junction. Its function is as follows. Structural component of gap junctions. Gap junctions are dodecameric channels that connect the cytoplasm of adjoining cells. They are formed by the docking of two hexameric hemichannels, one from each cell membrane. Small molecules and ions diffuse from one cell to a neighboring cell via the central pore. This Rattus norvegicus (Rat) protein is Gap junction beta-4 protein (Gjb4).